The following is a 450-amino-acid chain: Glucose-6-phosphate isomerase (450 aa).

At T39 the chain carries Phosphothreonine. E291 acts as the Proton donor in catalysis. Catalysis depends on residues H312 and K426.

The protein belongs to the GPI family.

The protein resides in the cytoplasm. It carries out the reaction alpha-D-glucose 6-phosphate = beta-D-fructose 6-phosphate. It participates in carbohydrate biosynthesis; gluconeogenesis. It functions in the pathway carbohydrate degradation; glycolysis; D-glyceraldehyde 3-phosphate and glycerone phosphate from D-glucose: step 2/4. Its function is as follows. Catalyzes the reversible isomerization of glucose-6-phosphate to fructose-6-phosphate. The chain is Glucose-6-phosphate isomerase from Bacillus cytotoxicus (strain DSM 22905 / CIP 110041 / 391-98 / NVH 391-98).